A 63-amino-acid chain; its full sequence is Large ribosomal subunit protein uL29 (63 aa).

It belongs to the universal ribosomal protein uL29 family.

The protein is Large ribosomal subunit protein uL29 of Shewanella pealeana (strain ATCC 700345 / ANG-SQ1).